Reading from the N-terminus, the 1142-residue chain is Serine/threonine-protein kinase dst2 (1142 aa).

A Protein kinase domain is found at 20–276; the sequence is FELIEEIAEG…ATELLKHPFV (257 aa). Residues 26–34 and lysine 49 contribute to the ATP site; that span reads IAEGSFGTV. Residue aspartate 141 is the Proton acceptor of the active site. Positions 300–322 are enriched in acidic residues; the sequence is LEEGGDEDEDSSEQEGMDSDDKD. Disordered stretches follow at residues 300–492, 515–636, 744–768, 939–974, and 1040–1142; these read LEEG…KTLE, KKQQ…KSTP, ETNHLKERQVTETEQHIKQMTTEQR, SIEEQQKERLTLQQEEHRIQQESLKKQEQKKKGSVT, and EEQK…DNQD. A compositionally biased stretch (basic and acidic residues) spans 323–336; that stretch reads SDLKKSVGTSDRKS. Residues 355 to 365 are compositionally biased toward polar residues; that stretch reads QRKSTGQNLQL. Positions 371–390 are enriched in low complexity; sequence QQSSSSSSSSSSSLSSQSLQ. A compositionally biased stretch (polar residues) spans 391–413; that stretch reads PQAVNKSTDRLSANINGSNTKSN. Over residues 421 to 452 the composition is skewed to low complexity; the sequence is AAASASASSLNLSTGNLQQSLSGSGSITTNSG. Basic and acidic residues predominate over residues 467-477; it reads SSDDRSPDIRT. Over residues 541–554 the composition is skewed to low complexity; the sequence is KQNAAKATQQQKQS. 4 stretches are compositionally biased toward basic and acidic residues: residues 555–588, 597–635, 744–760, and 939–969; these read AAKEEKIQKQHKVEKETLSRQQKADREQLLKKNQ, KVTDQQKQQQREFKDQQKQQQKQKEHEFKDQNKVLDKST, ETNHLKERQVTETEQHI, and SIEEQQKERLTLQQEEHRIQQESLKKQEQKK. The stretch at 716-1050 forms a coiled coil; sequence QEYHTVLREN…EQKKSKLKLK (335 aa). The span at 1068–1091 shows a compositional bias: low complexity; the sequence is TGTTPPSTSSNQKTLNNSNGASSN.

It belongs to the protein kinase superfamily. STE Ser/Thr protein kinase family. STE20 subfamily. The cofactor is Mg(2+).

The catalysed reaction is L-seryl-[protein] + ATP = O-phospho-L-seryl-[protein] + ADP + H(+). It catalyses the reaction L-threonyl-[protein] + ATP = O-phospho-L-threonyl-[protein] + ADP + H(+). The protein is Serine/threonine-protein kinase dst2 of Dictyostelium discoideum (Social amoeba).